The sequence spans 391 residues: Shewanella-like protein phosphatase 2 (391 aa).

Positions 61, 63, 97, and 132 each coordinate Mn(2+). Catalysis depends on H133, which acts as the Proton donor. 2 residues coordinate Mn(2+): H232 and H295.

It belongs to the metallophosphoesterase superfamily. SLP family. Mn(2+) is required as a cofactor. As to expression, expressed in roots and siliques (at protein level).

It is found in the cytoplasm. It localises to the cytosol. Functionally, shows phosphatase activity, hydrolyzing the artificial substrate para-nitrophenylphosphate (pNPP) in vitro. This chain is Shewanella-like protein phosphatase 2, found in Arabidopsis thaliana (Mouse-ear cress).